The primary structure comprises 373 residues: ATP synthase gamma chain 1, chloroplastic (373 aa).

Residues 1 to 50 (MACSNLTTMWVSSKPSLSADSSSLSFRSVLKCPTNTSSPPSRASSVSPLQ) constitute a chloroplast transit peptide. The active site involves Cys-139. Residues Cys-249 and Cys-255 are joined by a disulfide bond. Phosphoserine is present on Ser-347.

It belongs to the ATPase gamma chain family. As to quaternary structure, F-type ATPases have 2 components, CF(1) - the catalytic core - and CF(0) - the membrane proton channel. CF(1) has five subunits: alpha(3), beta(3), gamma(1), delta(1), epsilon(1). CF(0) has four main subunits: a, b, b' and c. Interacts with PAB.

It is found in the plastid. The protein resides in the chloroplast thylakoid membrane. Functionally, produces ATP from ADP in the presence of a proton gradient across the membrane. The gamma chain is believed to be important in regulating ATPase activity and the flow of protons through the CF(0) complex. This is ATP synthase gamma chain 1, chloroplastic (ATPC1) from Arabidopsis thaliana (Mouse-ear cress).